The following is a 440-amino-acid chain: Homocitrate synthase, mitochondrial (440 aa).

Residues 1–23 (MSENNEFQSVTESTTAPTTSNPY) are compositionally biased toward polar residues. The segment at 1–27 (MSENNEFQSVTESTTAPTTSNPYGPNP) is disordered. One can recognise a Pyruvate carboxyltransferase domain in the interval 37–290 (FQLIDSTLRE…RSKYKLHKIR (254 aa)). Arginine 45 serves as a coordination point for 2-oxoglutarate. Glutamate 46 serves as a coordination point for Mg(2+). Residues histidine 105, arginine 165, and threonine 199 each contribute to the 2-oxoglutarate site. Histidine 226 and histidine 228 together coordinate Mg(2+). Residue histidine 323 is the Proton acceptor of the active site. Serine 399 is modified (phosphoserine). Threonine 410 carries the post-translational modification Phosphothreonine.

Belongs to the alpha-IPM synthase/homocitrate synthase family. Homocitrate synthase LYS20/LYS21 subfamily. The cofactor is Mg(2+). Mn(2+) serves as cofactor.

It localises to the mitochondrion. The catalysed reaction is acetyl-CoA + 2-oxoglutarate + H2O = (2R)-homocitrate + CoA + H(+). The protein operates within amino-acid biosynthesis; L-lysine biosynthesis via AAA pathway; L-alpha-aminoadipate from 2-oxoglutarate: step 1/5. Catalyzes the aldol-type condensation of 2-oxoglutarate with acetyl-CoA to yield homocitrate. Carries out the first step of the alpha-aminoadipate (AAA) lysine biosynthesis pathway. In Saccharomyces cerevisiae (strain ATCC 204508 / S288c) (Baker's yeast), this protein is Homocitrate synthase, mitochondrial (LYS21).